Consider the following 336-residue polypeptide: Poly(A) RNA polymerase cid12 (336 aa).

2 residues coordinate Mg(2+): Asp77 and Asp79. The PAP-associated domain occupies 209 to 263; sequence ALLQKFFYFWGVEWTYELFVLRPLTGQIVPKLQKGWLNEVQPNLLSIEDPIDRNN. Ser325 is modified (phosphoserine). Phosphothreonine is present on Thr327. Phosphoserine is present on Ser329.

It belongs to the DNA polymerase type-B-like family. As to quaternary structure, cid12, hrr1 and rdp1 interact forming the RNA-directed RNA polymerase complex (RDRC). The RDRC complex interacts with the RITS complex via interaction between ago1 and hrr1. Clr4 has a role in mediating this interaction. The cofactor is Mg(2+). Requires Mn(2+) as cofactor.

The protein localises to the cytoplasm. It is found in the nucleus. It catalyses the reaction RNA(n) + ATP = RNA(n)-3'-adenine ribonucleotide + diphosphate. Has a role in the RNA interference (RNAi) pathway which is important for heterochromatin formation and accurate chromosome segregation. A member of the RNA-directed RNA polymerase complex (RDRC) which is involved in the generation of small interfering RNAs (siRNAs) and mediate their association with the RNA-induced transcriptional silencing (RITS) complex. RITS acts as a priming complex for dsRNA synthesis at the site of non-coding centromeric RNA. The protein is Poly(A) RNA polymerase cid12 (cid12) of Schizosaccharomyces pombe (strain 972 / ATCC 24843) (Fission yeast).